The following is a 400-amino-acid chain: MKEKTIIIVGGGQAAAMAAASLRQQGFTGELHLFSDEQHLPYERPPLSKSMLLEDSPQLQSVLPAHWWQENNVHLHSGVTIKTLGRDTRELVLANGESWHWDQLFIATGAAARPLPLLDALGERCFTLRHAGDAARLREVLQPERSVVIVGAGTIGLELAASATQRRCKVTVIELAATVMGRNAPPPVQRYLLQRHQQAGVRILLNNAIEHVVDGEKVELTLQSGETLQADVVIYGIGISANDQLAREANLDTTNGIVIDEACRTCDPAIFAGGDVAITRLDNGALHRCESWENANNHAQIAAAAMLGLPLPLLPPPWFWSDQYSDNLQFIGDMRGDDWLCRGNPETQKAIWFNLQNGVLIGAVTLNQGREIRSIRKWIQSGKTFDAKQLTDENIALKSL.

5 to 36 (TIIIVGGGQAAAMAAASLRQQGFTGELHLFSD) contacts FAD. 146–174 (SVVIVGAGTIGLELAASATQRRCKVTVIE) is a binding site for NAD(+).

This sequence belongs to the bacterial ring-hydroxylating dioxygenase ferredoxin reductase family. In terms of assembly, this dioxygenase system consists of four proteins: the two subunits of the hydroxylase component (HcaE and HcaF), a ferredoxin (HcaC) and a ferredoxin reductase (HcaD). Requires FAD as cofactor.

The catalysed reaction is 2 reduced [2Fe-2S]-[ferredoxin] + NAD(+) + H(+) = 2 oxidized [2Fe-2S]-[ferredoxin] + NADH. The protein operates within aromatic compound metabolism; 3-phenylpropanoate degradation. In terms of biological role, part of the multicomponent 3-phenylpropionate dioxygenase, that converts 3-phenylpropionic acid (PP) and cinnamic acid (CI) into 3-phenylpropionate-dihydrodiol (PP-dihydrodiol) and cinnamic acid-dihydrodiol (CI-dihydrodiol), respectively. This Escherichia coli O157:H7 protein is 3-phenylpropionate/cinnamic acid dioxygenase ferredoxin--NAD(+) reductase component.